Here is a 364-residue protein sequence, read N- to C-terminus: UDP-3-O-acylglucosamine N-acyltransferase (364 aa).

H267 functions as the Proton acceptor in the catalytic mechanism.

The protein belongs to the transferase hexapeptide repeat family. LpxD subfamily. In terms of assembly, homotrimer.

The catalysed reaction is a UDP-3-O-[(3R)-3-hydroxyacyl]-alpha-D-glucosamine + a (3R)-hydroxyacyl-[ACP] = a UDP-2-N,3-O-bis[(3R)-3-hydroxyacyl]-alpha-D-glucosamine + holo-[ACP] + H(+). Its pathway is bacterial outer membrane biogenesis; LPS lipid A biosynthesis. In terms of biological role, catalyzes the N-acylation of UDP-3-O-acylglucosamine using 3-hydroxyacyl-ACP as the acyl donor. Is involved in the biosynthesis of lipid A, a phosphorylated glycolipid that anchors the lipopolysaccharide to the outer membrane of the cell. The polypeptide is UDP-3-O-acylglucosamine N-acyltransferase (Bordetella petrii (strain ATCC BAA-461 / DSM 12804 / CCUG 43448)).